We begin with the raw amino-acid sequence, 113 residues long: MELPANVQNQLMQFQQLQQQLQMIMYQKQQFETQLKEMEKAIEEMEKSDSEEVFKMAGGILVKRNKAEVKEELSEKIETLQLRVTTFEKQEEKMQKRYTELQESLQKVMGQGQ.

Belongs to the prefoldin subunit beta family. Heterohexamer of two alpha and four beta subunits.

Its subcellular location is the cytoplasm. Functionally, molecular chaperone capable of stabilizing a range of proteins. Seems to fulfill an ATP-independent, HSP70-like function in archaeal de novo protein folding. This Methanococcus maripaludis (strain DSM 14266 / JCM 13030 / NBRC 101832 / S2 / LL) protein is Prefoldin subunit beta.